Consider the following 639-residue polypeptide: Chaperone protein DnaK (639 aa).

Position 198 is a phosphothreonine; by autocatalysis (Thr-198). Residues 604 to 639 are disordered; it reads KSQAQGGDNADAGKQANAAADDVVDAEFEEVKDDKK. Residues 606–624 are compositionally biased toward low complexity; the sequence is QAQGGDNADAGKQANAAAD. Over residues 625 to 639 the composition is skewed to acidic residues; sequence DVVDAEFEEVKDDKK.

This sequence belongs to the heat shock protein 70 family.

In terms of biological role, acts as a chaperone. The chain is Chaperone protein DnaK from Shewanella baltica (strain OS223).